The sequence spans 214 residues: Ribosomal RNA small subunit methyltransferase G (214 aa).

Residues Gly77, Leu82, 128–129 (VE), and Arg143 contribute to the S-adenosyl-L-methionine site.

The protein belongs to the methyltransferase superfamily. RNA methyltransferase RsmG family.

It localises to the cytoplasm. The enzyme catalyses guanosine(527) in 16S rRNA + S-adenosyl-L-methionine = N(7)-methylguanosine(527) in 16S rRNA + S-adenosyl-L-homocysteine. Specifically methylates the N7 position of guanine in position 527 of 16S rRNA. The protein is Ribosomal RNA small subunit methyltransferase G of Nitrosococcus oceani (strain ATCC 19707 / BCRC 17464 / JCM 30415 / NCIMB 11848 / C-107).